A 412-amino-acid chain; its full sequence is Chorismate synthase (412 aa).

Residues Arg40 and Arg46 each coordinate NADP(+). FMN is bound by residues 135–137 (RAS), 256–257 (QA), Gly300, 315–319 (KPIST), and Arg341. The span at 391–404 (QREPRQESSDEQPA) shows a compositional bias: basic and acidic residues. Positions 391–412 (QREPRQESSDEQPARRAANTAG) are disordered.

It belongs to the chorismate synthase family. As to quaternary structure, homotetramer. The cofactor is FMNH2.

It carries out the reaction 5-O-(1-carboxyvinyl)-3-phosphoshikimate = chorismate + phosphate. It participates in metabolic intermediate biosynthesis; chorismate biosynthesis; chorismate from D-erythrose 4-phosphate and phosphoenolpyruvate: step 7/7. In terms of biological role, catalyzes the anti-1,4-elimination of the C-3 phosphate and the C-6 proR hydrogen from 5-enolpyruvylshikimate-3-phosphate (EPSP) to yield chorismate, which is the branch point compound that serves as the starting substrate for the three terminal pathways of aromatic amino acid biosynthesis. This reaction introduces a second double bond into the aromatic ring system. The polypeptide is Chorismate synthase (Mycobacteroides abscessus (strain ATCC 19977 / DSM 44196 / CCUG 20993 / CIP 104536 / JCM 13569 / NCTC 13031 / TMC 1543 / L948) (Mycobacterium abscessus)).